We begin with the raw amino-acid sequence, 470 residues long: 3-oxo-isoapionate kinase (470 aa).

The substrate site is built by Asp-30 and Arg-78. ATP contacts are provided by residues Ser-291, 403 to 406 (GGDS), and Gly-451.

This sequence belongs to the four-carbon acid sugar kinase family.

It carries out the reaction 3-oxoisoapionate + ATP = 3-oxoisoapionate 4-phosphate + ADP + H(+). Its pathway is carbohydrate metabolism. In terms of biological role, involved in catabolism of D-apiose. Catalyzes the phosphorylation of 3-oxo-isoapionate to 3-oxo-isoapionate 4-phosphate. In Paraburkholderia graminis (strain ATCC 700544 / DSM 17151 / LMG 18924 / NCIMB 13744 / C4D1M), this protein is 3-oxo-isoapionate kinase.